Consider the following 348-residue polypeptide: Dihydroorotate dehydrogenase (quinone) (348 aa).

Residues 65 to 69 (AGLDK) and Thr-89 each bind FMN. Lys-69 contributes to the substrate binding site. 114–118 (NRLGF) serves as a coordination point for substrate. Asn-147 and Asn-180 together coordinate FMN. Residue Asn-180 participates in substrate binding. The active-site Nucleophile is Ser-183. A substrate-binding site is contributed by Asn-185. Positions 225 and 253 each coordinate FMN. 254-255 (NT) provides a ligand contact to substrate. FMN is bound by residues Gly-276, Gly-305, and 326-327 (YS).

The protein belongs to the dihydroorotate dehydrogenase family. Type 2 subfamily. Monomer. Requires FMN as cofactor.

It is found in the cell membrane. The catalysed reaction is (S)-dihydroorotate + a quinone = orotate + a quinol. It functions in the pathway pyrimidine metabolism; UMP biosynthesis via de novo pathway; orotate from (S)-dihydroorotate (quinone route): step 1/1. Its function is as follows. Catalyzes the conversion of dihydroorotate to orotate with quinone as electron acceptor. This chain is Dihydroorotate dehydrogenase (quinone), found in Delftia acidovorans (strain DSM 14801 / SPH-1).